A 271-amino-acid polypeptide reads, in one-letter code: Thiazole synthase (271 aa).

K108 acts as the Schiff-base intermediate with DXP in catalysis. 1-deoxy-D-xylulose 5-phosphate contacts are provided by residues G169, 195–196, and 217–218; these read AG and NS.

This sequence belongs to the ThiG family. Homotetramer. Forms heterodimers with either ThiH or ThiS.

It is found in the cytoplasm. The catalysed reaction is [ThiS sulfur-carrier protein]-C-terminal-Gly-aminoethanethioate + 2-iminoacetate + 1-deoxy-D-xylulose 5-phosphate = [ThiS sulfur-carrier protein]-C-terminal Gly-Gly + 2-[(2R,5Z)-2-carboxy-4-methylthiazol-5(2H)-ylidene]ethyl phosphate + 2 H2O + H(+). It functions in the pathway cofactor biosynthesis; thiamine diphosphate biosynthesis. Catalyzes the rearrangement of 1-deoxy-D-xylulose 5-phosphate (DXP) to produce the thiazole phosphate moiety of thiamine. Sulfur is provided by the thiocarboxylate moiety of the carrier protein ThiS. In vitro, sulfur can be provided by H(2)S. This is Thiazole synthase from Prochlorococcus marinus (strain SARG / CCMP1375 / SS120).